Consider the following 78-residue polypeptide: Kassorin-S (78 aa).

Residues 1–22 form the signal peptide; it reads MLTLKKSMLLLFFLGMVSLSLA. The propeptide occupies 23 to 64; it reads NSKRADEEGEDKRADEEGEDKRADEEGEDKRADEEGEEKRKR. The interval 24 to 60 is disordered; it reads SKRADEEGEDKRADEEGEDKRADEEGEDKRADEEGEE. Over residues 25–60 the composition is skewed to basic and acidic residues; the sequence is KRADEEGEDKRADEEGEDKRADEEGEDKRADEEGEE. L77 carries the post-translational modification Leucine amide.

It belongs to the frog skin active peptide (FSAP) family. Brevinin subfamily. As to expression, expressed by the skin glands.

The protein localises to the secreted. In terms of biological role, antimicrobial peptide. Active against the Gram-positive bacterium S.aureus (MIC=30 uM) and the yeast C.albicans (MIC=100 uM). Not effective against the Gram-negative bacterium E.coli at concentrations up to 250 uM. Lacks ability to induce contraction of smooth muscle in isolated guinea pig urinary bladder. Elicits histamine release from rat peritoneal mast cells. The chain is Kassorin-S from Kassina senegalensis (Senegal running frog).